The chain runs to 163 residues: Calcium-binding protein 2 (163 aa).

G2 carries the N-myristoyl glycine lipid modification. EF-hand domains are found at residues E21–M56, G72–A89, I95–E130, and L132–R163. Ca(2+) contacts are provided by D34, D36, D38, Y40, and E45. Residues D108, N110, D112, C114, E119, D145, N147, D149, and E156 each contribute to the Ca(2+) site.

It is found in the cytoplasm. It localises to the perinuclear region. Its subcellular location is the cell membrane. The protein resides in the golgi apparatus. Functionally, required for sound encoding at inner hair cells (IHCs) synapses, likely via inhibition of the inactivation of voltage-gated calcium channel of type 1.3 (Cav1.3) in the IHCs. Required for the normal transfer of light signals through the retina. In Bos taurus (Bovine), this protein is Calcium-binding protein 2 (CABP2).